Reading from the N-terminus, the 1049-residue chain is Desmoglein-1 (1049 aa).

An N-terminal signal peptide occupies residues 1–23 (MDWSFFRVVAMLFIFLVVVEVNS). Positions 24 to 49 (EFRIQVRDYNTKNGTIKWHSIRRQKR) are excised as a propeptide. N-linked (GlcNAc...) asparagine glycosylation is found at Asn-36, Asn-110, and Asn-180. Cadherin domains lie at 50–158 (EWIK…PVFS), 159–270 (MATF…PYME), 271–385 (QSSY…GPVF), and 386–497 (RPGS…TEPN). The Extracellular segment spans residues 50–548 (EWIKFAAACR…LLSDNVHFGP (499 aa)). A disordered region spans residues 485–534 (SFGNDDRTNTEPNTKITTNTGRQESTSSTNYDTSTTSTDSSQVYSSEPGN). Polar residues predominate over residues 494-508 (TEPNTKITTNTGRQE). A compositionally biased stretch (low complexity) spans 509-530 (STSSTNYDTSTTSTDSSQVYSS). The helical transmembrane segment at 549–569 (AGIGLLIMGFLVLGLVPFLMI) threads the bilayer. Over 570-1049 (CCDCGGAPRS…TKYSTVQYSK (480 aa)) the chain is Cytoplasmic. Ser-579 carries the post-translational modification Phosphoserine. Desmoglein repeat repeat units follow at residues 813–839 (TYPS…TVTE), 840–869 (SYTT…ERVV), 870–899 (GPIS…ERVI), 900–927 (APSS…ERVI), and 928–956 (QPTS…ERVV). The tract at residues 1014–1035 (HMRSSSDHHFNQTIGSASPSTA) is disordered. Residues 1024 to 1035 (NQTIGSASPSTA) are compositionally biased toward polar residues.

As to quaternary structure, binds to JUP/plakoglobin. Interacts with PKP2. Interacts with DSC3; there is evidence to suggest that the interaction promotes cell-cell adhesion of keratinocytes. In terms of assembly, (Microbial infection) Interacts with Staphylococcus aureus protein SdrD; this interaction increases S.aureus adherence to keratinocytes. Expressed in all suprabasal layers of the epidermis, with the highest expression seen in the granular layer (at protein level).

The protein localises to the cell membrane. Its subcellular location is the cell junction. It is found in the desmosome. The protein resides in the cytoplasm. It localises to the nucleus. Its function is as follows. Component of intercellular desmosome junctions. Involved in the interaction of plaque proteins and intermediate filaments mediating cell-cell adhesion. This Homo sapiens (Human) protein is Desmoglein-1 (DSG1).